The following is a 469-amino-acid chain: Probable periplasmic serine endoprotease DegP-like (469 aa).

The signal sequence occupies residues 1-25 (MKVCQKYTAVLLVWLSAVVSMRAGA). Active-site charge relay system residues include H108, D138, and S211. Residues 209–211 (GNS) and 266–270 (LGVLI) each bind substrate. 2 PDZ domains span residues 255–346 (LKDT…VRRG) and 352–457 (AVEI…IRQG).

The protein belongs to the peptidase S1C family.

The protein resides in the periplasm. The catalysed reaction is Acts on substrates that are at least partially unfolded. The cleavage site P1 residue is normally between a pair of hydrophobic residues, such as Val-|-Val.. Its function is as follows. Might be efficient in the degradation of transiently denatured and unfolded proteins which accumulate in the periplasm following stress conditions. This is Probable periplasmic serine endoprotease DegP-like (mucD) from Hahella chejuensis (strain KCTC 2396).